The sequence spans 97 residues: Protein MxiI (97 aa).

It to S.typhimurium PrgJ.

Functionally, necessary for the secretion of IPA invasins. The protein is Protein MxiI (mxiI) of Shigella flexneri.